The chain runs to 715 residues: Probable GTP diphosphokinase RSH3, chloroplastic (715 aa).

The N-terminal 64 residues, 1 to 64 (MVVATTIALY…LLFSGASVKS (64 aa)), are a transit peptide targeting the chloroplast. Low complexity predominate over residues 65-74 (SSSSSSSHPS). Positions 65–84 (SSSSSSSHPSVGEELASIRH) are disordered. The region spanning 237–341 (YLQHCVETAM…IKLADRLHNM (105 aa)) is the HD domain.

Belongs to the RelA/SpoT family. As to expression, expressed in roots, hypocotyls, shoots, cotyledons, rosette and cauline leaves, stems, petals, sepals, stamens, pistils and siliques.

Its subcellular location is the plastid. It localises to the chloroplast. The catalysed reaction is GTP + ATP = guanosine 3'-diphosphate 5'-triphosphate + AMP. In terms of biological role, possesses ppGpp (guanosine 3'-diphosphate 5'-diphosphate) synthetase activity in vitro and is able to functionally complement E.coli relA mutants. May be involved in a rapid plant ppGpp-mediated response to pathogens and other stresses. The chain is Probable GTP diphosphokinase RSH3, chloroplastic (RSH3) from Arabidopsis thaliana (Mouse-ear cress).